A 591-amino-acid chain; its full sequence is Lysyl oxidase homolog 1 (591 aa).

Residues 1 to 22 (MALALTGWQLVWGACVCVLVHG) form the signal peptide. Positions 23–91 (QQAPPGQGSD…PRRRGGLRRR (69 aa)) are excised as a propeptide. 2 disordered regions span residues 77–107 (APQAPPRRRGGLRRRQAPSLPLPGRVGSDTV) and 233–373 (EYGG…RLSV). Positions 82-92 (PRRRGGLRRRQ) are enriched in basic residues. Residues 298–313 (NGGGGGGTYGGGGGDP) are compositionally biased toward gly residues. Residues 319-386 (PPYGNMPPEA…YRPNQNGRGL (68 aa)) are interaction with FBLN5. The lysyl-oxidase like stretch occupies residues 387–591 (PDLVPDPNYV…STTNCKIVQS (205 aa)). Cystine bridges form between Cys-412–Cys-418, Cys-465–Cys-514, Cys-498–Cys-504, Cys-525–Cys-535, and Cys-572–Cys-586. Cu cation contacts are provided by His-466, His-468, and His-470. Residues 494 to 529 (KASFCLEDSTCDFGNLKRYACTSHTQGLSPGCYDTY) constitute a cross-link (lysine tyrosylquinone (Lys-Tyr)). Tyr-529 carries the 2',4',5'-topaquinone modification.

It belongs to the lysyl oxidase family. In terms of assembly, interacts (via propeptide) with EFEMP2. Interacts with FBLN5. Cu cation serves as cofactor. Requires lysine tyrosylquinone residue as cofactor. Post-translationally, the lysine tyrosylquinone cross-link (LTQ) is generated by condensation of the epsilon-amino group of a lysine with a topaquinone produced by oxidation of tyrosine. In terms of processing, proteolytic processing by a furin-like protease causes removal of N-terminal propeptide resulting in an enzyme largely inactive, but further proteolytic processing by BMP1 results in enzyme activation.

It is found in the secreted. It localises to the extracellular space. Its subcellular location is the extracellular matrix. The catalysed reaction is L-lysyl-[protein] + O2 + H2O = (S)-2-amino-6-oxohexanoyl-[protein] + H2O2 + NH4(+). Its function is as follows. Catalyzes the oxidative deamination of lysine and hydroxylysine residues in collagen and elastin, resulting in the formation of covalent cross-linkages, and the stabilization of collagen and elastin fibers. Essential for the elastic fiber homeostasis and for their maintenance at adult age. The protein is Lysyl oxidase homolog 1 (LOXL1) of Bos taurus (Bovine).